A 308-amino-acid chain; its full sequence is 3'(2'),5'-bisphosphate nucleotidase 1 (308 aa).

Position 2 is an N-acetylalanine (Ala-2). Asp-51 functions as the Proton acceptor in the catalytic mechanism. Positions 74, 117, 119, and 120 each coordinate Mg(2+). The Proton acceptor role is filled by Thr-122. Thr-122 is subject to Phosphothreonine. Thr-195, His-198, Gly-220, and Lys-224 together coordinate AMP. At Ser-240 the chain carries Phosphoserine. Lys-244 is subject to N6-succinyllysine. Residue Asp-247 coordinates Mg(2+).

This sequence belongs to the inositol monophosphatase superfamily. The cofactor is Mg(2+). Widely expressed. Highly expressed in kidney.

The enzyme catalyses adenosine 3',5'-bisphosphate + H2O = AMP + phosphate. It catalyses the reaction adenosine 2',5'-bisphosphate + H2O = AMP + phosphate. It carries out the reaction 3'-phosphoadenylyl sulfate + H2O = adenosine 5'-phosphosulfate + phosphate. The catalysed reaction is 1D-myo-inositol 1,4-bisphosphate + H2O = 1D-myo-inositol 4-phosphate + phosphate. The enzyme catalyses 1D-myo-inositol 1,3,4-trisphosphate + H2O = 1D-myo-inositol 3,4-bisphosphate + phosphate. With respect to regulation, uncompetitively inhibited by Li(+) (IC(50)=157 uM). PAP hydrolysis is competitively inhibited by PAPS (IC(50)=0.7 uM) and by inositol 1,4-bisphosphate (IC(50)=15 uM). Functionally, phosphatase that converts 3'(2')-phosphoadenosine 5'-phosphate (PAP) to AMP and adenosine 3'-phosphate 5'-phosphosulfate (PAPS) to adenosine 5'-phosphosulfate (APS). Is also able to hydrolyze inositol 1,4-bisphosphate (Ins(1,4)P2) and inositol 1,3,4-trisphosphate (Ins(1,3,4)P3), and is not active on Ins(1)P, Ins(4)P, Ins(3,4)P2, Ins(1,4,5)P3, Ins(1,3,4,5)P4, Ins(1,3,4,5,6)P5 or InsP6. Probably prevents the toxic accumulation of PAP, a compound which inhibits a variety of proteins, including PAPS-utilizing enzymes such as sulfotransferases, and RNA processing enzymes. Could also play a role in inositol recycling and phosphoinositide metabolism. The protein is 3'(2'),5'-bisphosphate nucleotidase 1 (Bpnt1) of Mus musculus (Mouse).